Consider the following 302-residue polypeptide: Sulfate adenylyltransferase subunit 2 (302 aa).

The protein belongs to the PAPS reductase family. CysD subfamily. As to quaternary structure, heterodimer composed of CysD, the smaller subunit, and CysN.

The catalysed reaction is sulfate + ATP + H(+) = adenosine 5'-phosphosulfate + diphosphate. It functions in the pathway sulfur metabolism; hydrogen sulfide biosynthesis; sulfite from sulfate: step 1/3. Its function is as follows. With CysN forms the ATP sulfurylase (ATPS) that catalyzes the adenylation of sulfate producing adenosine 5'-phosphosulfate (APS) and diphosphate, the first enzymatic step in sulfur assimilation pathway. APS synthesis involves the formation of a high-energy phosphoric-sulfuric acid anhydride bond driven by GTP hydrolysis by CysN coupled to ATP hydrolysis by CysD. This chain is Sulfate adenylyltransferase subunit 2, found in Enterobacter sp. (strain 638).